A 174-amino-acid polypeptide reads, in one-letter code: Small ribosomal subunit protein uS5 (174 aa).

Residues 20–83 (IEDQLVAINR…EAGKKRMIKV (64 aa)) form the S5 DRBM domain.

Belongs to the universal ribosomal protein uS5 family. As to quaternary structure, part of the 30S ribosomal subunit. Contacts proteins S4 and S8.

In terms of biological role, with S4 and S12 plays an important role in translational accuracy. Located at the back of the 30S subunit body where it stabilizes the conformation of the head with respect to the body. The sequence is that of Small ribosomal subunit protein uS5 from Lactobacillus gasseri (strain ATCC 33323 / DSM 20243 / BCRC 14619 / CIP 102991 / JCM 1131 / KCTC 3163 / NCIMB 11718 / NCTC 13722 / AM63).